A 643-amino-acid chain; its full sequence is MPIITLPDGSQRQFDNPVSVLEVAQSIGAGLAKATIAGRVNGERRDACDMITEDSTLEIITAKDEDGLEIIRHSCAHLLGHAIKQLFPDVKMAIGPTIDNGFYYDVDLEHSLSQEDLDALEKRMLELAKTNYDVVKRRVSWQEARDTFEKRGEPYKMAILDENIAKDDHPALYHHEEYIDMCRGPHVPNMRFCHHFKLQKVAGAYWRGDSKNKMLQRIYGTAWADKKQLNEYLTRLEEAAKRDHRKIGKALDLYHMQEEAPGMVFWHNDGWTIFRELETFVRTKLKEYDYQEVKGPFMMDRVLWEKTGHWQNYGDLMFTTQSENREYAIKPMNCPGHVQIFNQGLKSYRDLPIRMAEFGSCHRNEPSGSLHGLMRVRGFTQDDAHIFCTEDQIESEVTSCIRMVYDIYSTFGFTNIAVKLSTRPENRIGDDAMWDRAEQGLANALAHNGLQYEIQEGEGAFYGPKIEFALRDCLDREWQCGTVQLDFALPGRLNASYVAEDNDRRTPVMIHRAILGSIERFIGIITEEYAGFFPSWLAPVQAVVMNITDSQAEYVQKVTKTLSDAGLRVKSDLRNEKVGFKVREHTLRRVPYMLVCGDKEISEGKVSVRTRRGADLGTYSVEEFVEILKNQVRSRELKLLGEE.

The region spanning 1-61 (MPIITLPDGS…TEDSTLEIIT (61 aa)) is the TGS domain. Residues 243-534 (DHRKIGKALD…ITEEYAGFFP (292 aa)) form a catalytic region. Residues Cys-334, His-385, and His-511 each coordinate Zn(2+).

The protein belongs to the class-II aminoacyl-tRNA synthetase family. In terms of assembly, homodimer. Requires Zn(2+) as cofactor.

The protein resides in the cytoplasm. It carries out the reaction tRNA(Thr) + L-threonine + ATP = L-threonyl-tRNA(Thr) + AMP + diphosphate + H(+). Functionally, catalyzes the attachment of threonine to tRNA(Thr) in a two-step reaction: L-threonine is first activated by ATP to form Thr-AMP and then transferred to the acceptor end of tRNA(Thr). Also edits incorrectly charged L-seryl-tRNA(Thr). The sequence is that of Threonine--tRNA ligase from Mannheimia succiniciproducens (strain KCTC 0769BP / MBEL55E).